The sequence spans 835 residues: Protein P (835 aa).

Residues Met-1–His-176 are terminal protein domain (TP). The segment at Lys-177–Leu-334 is spacer. Disordered stretches follow at residues Leu-211 to Thr-235 and Arg-258 to His-288. Residues Asp-335–Gln-680 are polymerase/reverse transcriptase domain (RT). The Reverse transcriptase domain occupies His-345–Ile-590. Residues Asp-417, Asp-541, and Asp-542 each coordinate Mg(2+).

The protein belongs to the hepadnaviridae P protein family.

It carries out the reaction DNA(n) + a 2'-deoxyribonucleoside 5'-triphosphate = DNA(n+1) + diphosphate. The catalysed reaction is Endonucleolytic cleavage to 5'-phosphomonoester.. Activated by host HSP70 and HSP40 in vitro to be able to bind the epsilon loop of the pgRNA. Because deletion of the RNase H region renders the protein partly chaperone-independent, the chaperones may be needed indirectly to relieve occlusion of the RNA-binding site by this domain. Inhibited by several reverse-transcriptase inhibitors: Lamivudine, Adefovir and Entecavir. Multifunctional enzyme that converts the viral RNA genome into dsDNA in viral cytoplasmic capsids. This enzyme displays a DNA polymerase activity that can copy either DNA or RNA templates, and a ribonuclease H (RNase H) activity that cleaves the RNA strand of RNA-DNA heteroduplexes in a partially processive 3'- to 5'-endonucleasic mode. Neo-synthesized pregenomic RNA (pgRNA) are encapsidated together with the P protein, and reverse-transcribed inside the nucleocapsid. Initiation of reverse-transcription occurs first by binding the epsilon loop on the pgRNA genome, and is initiated by protein priming, thereby the 5'-end of (-)DNA is covalently linked to P protein. Partial (+)DNA is synthesized from the (-)DNA template and generates the relaxed circular DNA (RC-DNA) genome. After budding and infection, the RC-DNA migrates in the nucleus, and is converted into a plasmid-like covalently closed circular DNA (cccDNA). The activity of P protein does not seem to be necessary for cccDNA generation, and is presumably released from (+)DNA by host nuclear DNA repair machinery. The sequence is that of Protein P from Woolly monkey hepatitis B virus (isolate Louisville) (WMHBV).